The following is a 582-amino-acid chain: Inactive metallocarboxypeptidase ECM14 (582 aa).

An N-terminal signal peptide occupies residues 1–20 (MHILQVITGATLVSVPFVSA). The propeptide occupies 21 to 172 (IPSSTSEFLP…QAVYESYPQP (152 aa)). The Peptidase M14 domain occupies 200–522 (DYQPLSVIIP…NAVLVFGQFL (323 aa)). The Zn(2+) site is built by histidine 265 and glutamate 268. Substrate contacts are provided by residues 265–268 (HARE), arginine 323, and 340–341 (DR). Cysteine 334 and cysteine 357 are oxidised to a cystine. Asparagine 381 and asparagine 387 each carry an N-linked (GlcNAc...) asparagine glycan. Histidine 397 contributes to the Zn(2+) binding site. Residue 398 to 399 (SY) coordinates substrate. Acidic residues predominate over residues 561–571 (SNQLEDDDNEN). The disordered stretch occupies residues 561 to 582 (SNQLEDDDNENDTLLGFRTQKV). Asparagine 571 carries an N-linked (GlcNAc...) asparagine glycan.

The protein belongs to the peptidase M14 family. Requires Zn(2+) as cofactor.

The protein localises to the vacuole. The protein resides in the secreted. Its function is as follows. Inactive carboxypeptidase that may play a role in cell wall organization and biogenesis. This is Inactive metallocarboxypeptidase ECM14 (ECM14) from Coccidioides posadasii (strain C735) (Valley fever fungus).